The primary structure comprises 241 residues: NAD-dependent protein deacetylase 2 (241 aa).

The region spanning 1 to 241 (MTGKPLVAIL…ALPALLRGLG (241 aa)) is the Deacetylase sirtuin-type domain. Residues Ala-13, Thr-17, Arg-25, Gln-92, Val-94, Asp-95, and His-112 each coordinate NAD(+). Residues Val-94 and Asp-95 each contribute to the nicotinamide site. The active-site Proton acceptor is His-112. 4 residues coordinate Zn(2+): Cys-120, Cys-123, Cys-145, and Cys-148. Positions 186, 187, 211, and 229 each coordinate NAD(+).

It belongs to the sirtuin family. Class U subfamily. The cofactor is Zn(2+).

Its subcellular location is the cytoplasm. It carries out the reaction N(6)-acetyl-L-lysyl-[protein] + NAD(+) + H2O = 2''-O-acetyl-ADP-D-ribose + nicotinamide + L-lysyl-[protein]. Its function is as follows. NAD-dependent protein deacetylase which modulates the activities of several enzymes which are inactive in their acetylated form. This Streptomyces coelicolor (strain ATCC BAA-471 / A3(2) / M145) protein is NAD-dependent protein deacetylase 2.